The primary structure comprises 103 residues: Protein SUP-1 (103 aa).

Positions 1–16 (MMSYIALAACIGLAMA) are cleaved as a signal peptide. Topologically, residues 17–75 (ANVDHDVKSAVNEVTTTKDGDTYCPVPLVGTKCGTSSIFHYWKCCGELNKECCFNLQTW) are extracellular. Residues 76-96 (VWVTLALFGVIFIASFVISLV) form a helical membrane-spanning segment. Residues 97-103 (RCICCRK) lie on the Cytoplasmic side of the membrane.

In terms of tissue distribution, expressed in a subset of neurons and in body wall muscles. In the nervous system, expressed specifically in cholinergic motor neurons of the ventral nerve cord, a subset of cholinergic head neurons, anterior sublateral neurons, and body sublateral neurons (at protein level).

Its subcellular location is the cell membrane. It is found in the perikaryon. The protein localises to the cell projection. The protein resides in the synapse. It localises to the cytoplasmic vesicle. Its subcellular location is the secretory vesicle. It is found in the synaptic vesicle. Functionally, may be involved in trafficking or stabilization of the vesicular acetylcholine transporter unc-17. The protein is Protein SUP-1 of Caenorhabditis elegans.